The chain runs to 343 residues: MTTITITRPDDWHIHLRDGAQLKDTVRDISRYMGRAIVMPNLVPPAIDTETALTYYDRIKAQVPAGSQFEPLMVLYLTDKTSPDEIRKAKASGKIVAAKLYPAGATTNSDSGVTELKNIYPALEAMQEVGMLFLVHGEVTDSSIDIFDRERVFIENILSKIVADFPELKIVLEHITTKDAVDFVTQASDNVAATITAHHLLYNRNHMLAGGIRPHFYCLPILKRNTHQQALLAAAASGSKKFFLGTDSAPHAKDKKEAACGCAGSYTAHAAIELYAEAFESVNALDKLEAFASFNGPDFYNLPRNADTITLVKKPWNVPATYPLGDTNVVPIRAGEAIDWQVE.

Zn(2+) contacts are provided by H13 and H15. Substrate contacts are provided by residues 15–17 (HLR) and N41. Zn(2+) contacts are provided by K99, H136, and H174. K99 carries the post-translational modification N6-carboxylysine. H136 provides a ligand contact to substrate. L219 lines the substrate pocket. D247 is a binding site for Zn(2+). D247 is an active-site residue. The substrate site is built by H251 and A263.

The protein belongs to the metallo-dependent hydrolases superfamily. DHOase family. Class II DHOase subfamily. As to quaternary structure, homodimer. The cofactor is Zn(2+).

The catalysed reaction is (S)-dihydroorotate + H2O = N-carbamoyl-L-aspartate + H(+). Its pathway is pyrimidine metabolism; UMP biosynthesis via de novo pathway; (S)-dihydroorotate from bicarbonate: step 3/3. Catalyzes the reversible cyclization of carbamoyl aspartate to dihydroorotate. This chain is Dihydroorotase, found in Shewanella baltica (strain OS155 / ATCC BAA-1091).